We begin with the raw amino-acid sequence, 244 residues long: 1-(5-phosphoribosyl)-5-[(5-phosphoribosylamino)methylideneamino] imidazole-4-carboxamide isomerase (244 aa).

The active-site Proton acceptor is the D10. D129 (proton donor) is an active-site residue.

This sequence belongs to the HisA/HisF family.

Its subcellular location is the cytoplasm. It carries out the reaction 1-(5-phospho-beta-D-ribosyl)-5-[(5-phospho-beta-D-ribosylamino)methylideneamino]imidazole-4-carboxamide = 5-[(5-phospho-1-deoxy-D-ribulos-1-ylimino)methylamino]-1-(5-phospho-beta-D-ribosyl)imidazole-4-carboxamide. It participates in amino-acid biosynthesis; L-histidine biosynthesis; L-histidine from 5-phospho-alpha-D-ribose 1-diphosphate: step 4/9. In Rhodococcus jostii (strain RHA1), this protein is 1-(5-phosphoribosyl)-5-[(5-phosphoribosylamino)methylideneamino] imidazole-4-carboxamide isomerase.